Consider the following 462-residue polypeptide: tRNA-2-methylthio-N(6)-dimethylallyladenosine synthase (462 aa).

In terms of domain architecture, MTTase N-terminal spans 18–138; sequence RKVFVKTYGC…LPNALARVRS (121 aa). [4Fe-4S] cluster-binding residues include Cys27, Cys63, Cys101, Cys179, Cys183, and Cys186. The Radical SAM core domain maps to 165 to 397; the sequence is RKRGVSAFLT…QALLSEQQYA (233 aa). One can recognise a TRAM domain in the interval 400–462; that stretch reads DSMIGREMDV…TNSLIAQKLA (63 aa).

Belongs to the methylthiotransferase family. MiaB subfamily. In terms of assembly, monomer. [4Fe-4S] cluster serves as cofactor.

Its subcellular location is the cytoplasm. The catalysed reaction is N(6)-dimethylallyladenosine(37) in tRNA + (sulfur carrier)-SH + AH2 + 2 S-adenosyl-L-methionine = 2-methylsulfanyl-N(6)-dimethylallyladenosine(37) in tRNA + (sulfur carrier)-H + 5'-deoxyadenosine + L-methionine + A + S-adenosyl-L-homocysteine + 2 H(+). Its function is as follows. Catalyzes the methylthiolation of N6-(dimethylallyl)adenosine (i(6)A), leading to the formation of 2-methylthio-N6-(dimethylallyl)adenosine (ms(2)i(6)A) at position 37 in tRNAs that read codons beginning with uridine. The chain is tRNA-2-methylthio-N(6)-dimethylallyladenosine synthase from Brucella anthropi (strain ATCC 49188 / DSM 6882 / CCUG 24695 / JCM 21032 / LMG 3331 / NBRC 15819 / NCTC 12168 / Alc 37) (Ochrobactrum anthropi).